A 365-amino-acid polypeptide reads, in one-letter code: Phosphoserine aminotransferase (365 aa).

An L-glutamate-binding site is contributed by Arg42. Residues 76 to 77, Trp102, Thr156, Asp175, and Gln198 each bind pyridoxal 5'-phosphate; that span reads GR. Lys199 carries the N6-(pyridoxal phosphate)lysine modification. A pyridoxal 5'-phosphate-binding site is contributed by 240–241; it reads NT.

The protein belongs to the class-V pyridoxal-phosphate-dependent aminotransferase family. SerC subfamily. As to quaternary structure, homodimer. Pyridoxal 5'-phosphate is required as a cofactor.

Its subcellular location is the cytoplasm. It catalyses the reaction O-phospho-L-serine + 2-oxoglutarate = 3-phosphooxypyruvate + L-glutamate. It carries out the reaction 4-(phosphooxy)-L-threonine + 2-oxoglutarate = (R)-3-hydroxy-2-oxo-4-phosphooxybutanoate + L-glutamate. It participates in amino-acid biosynthesis; L-serine biosynthesis; L-serine from 3-phospho-D-glycerate: step 2/3. Its pathway is cofactor biosynthesis; pyridoxine 5'-phosphate biosynthesis; pyridoxine 5'-phosphate from D-erythrose 4-phosphate: step 3/5. Catalyzes the reversible conversion of 3-phosphohydroxypyruvate to phosphoserine and of 3-hydroxy-2-oxo-4-phosphonooxybutanoate to phosphohydroxythreonine. The polypeptide is Phosphoserine aminotransferase (Shewanella oneidensis (strain ATCC 700550 / JCM 31522 / CIP 106686 / LMG 19005 / NCIMB 14063 / MR-1)).